The following is a 334-amino-acid chain: Protein CUP-SHAPED COTYLEDON 3 (334 aa).

In terms of domain architecture, NAC spans 22–171 (LPPGFRFHPT…EWVICRVFNK (150 aa)). Residues 121–177 (VGMKKTLVFYKGRAPRGLKTKWVMHEYRLENDHSHRHTCKEEWVICRVFNKTGDRKN) mediate DNA binding.

In a general manner, present at the boundaries between mersitems and araising primordia.

The protein localises to the nucleus. Functionally, transcription activator. Involved in molecular mechanisms regulating shoot apical meristem (SAM) formation during embryogenesis and organ separation. Required for axillary meristem initiation and separation of the meristem from the main stem. May act as an inhibitor of cell division. This chain is Protein CUP-SHAPED COTYLEDON 3 (NAC031), found in Arabidopsis thaliana (Mouse-ear cress).